The sequence spans 180 residues: tRNA (cytidine(56)-2'-O)-methyltransferase (180 aa).

S-adenosyl-L-methionine-binding positions include Leu85, 114-118, and 132-139; these read GAEKV and VGNQPHSE.

It belongs to the aTrm56 family. Homodimer.

Its subcellular location is the cytoplasm. The enzyme catalyses cytidine(56) in tRNA + S-adenosyl-L-methionine = 2'-O-methylcytidine(56) in tRNA + S-adenosyl-L-homocysteine + H(+). In terms of biological role, specifically catalyzes the AdoMet-dependent 2'-O-ribose methylation of cytidine at position 56 in tRNAs. The chain is tRNA (cytidine(56)-2'-O)-methyltransferase from Thermococcus kodakarensis (strain ATCC BAA-918 / JCM 12380 / KOD1) (Pyrococcus kodakaraensis (strain KOD1)).